A 300-amino-acid polypeptide reads, in one-letter code: Ribosomal protein bS6--L-glutamate ligase (300 aa).

One can recognise an ATP-grasp domain in the interval 104–287 (MQLLARQGID…IAGKMIRWIE (184 aa)). ATP is bound by residues Lys141, 178 to 179 (EY), Asp187, and 211 to 213 (RSN). 3 residues coordinate Mg(2+): Asp248, Glu260, and Asn262. Residues Asp248, Glu260, and Asn262 each contribute to the Mn(2+) site.

It belongs to the RimK family. Requires Mg(2+) as cofactor. It depends on Mn(2+) as a cofactor.

In terms of biological role, an L-glutamate ligase that catalyzes the ATP-dependent post-translational addition of glutamate residues to the C-terminus of ribosomal protein bS6 (RpsF). Is also able to catalyze the synthesis of poly-alpha-glutamate in vitro, via ATP hydrolysis from unprotected glutamate as substrate. The number of glutamate residues added to either RpsF or to poly-alpha-glutamate changes with pH. This Escherichia fergusonii (strain ATCC 35469 / DSM 13698 / CCUG 18766 / IAM 14443 / JCM 21226 / LMG 7866 / NBRC 102419 / NCTC 12128 / CDC 0568-73) protein is Ribosomal protein bS6--L-glutamate ligase.